The following is a 235-amino-acid chain: Purine nucleoside phosphorylase DeoD-type (235 aa).

His4 is a binding site for a purine D-ribonucleoside. Phosphate-binding positions include Gly20, Arg24, Arg43, and 87–90 (RVGT). A purine D-ribonucleoside is bound by residues 179 to 181 (EME) and 203 to 204 (SD). Catalysis depends on Asp204, which acts as the Proton donor.

This sequence belongs to the PNP/UDP phosphorylase family. In terms of assembly, homohexamer; trimer of homodimers.

It catalyses the reaction a purine D-ribonucleoside + phosphate = a purine nucleobase + alpha-D-ribose 1-phosphate. The enzyme catalyses a purine 2'-deoxy-D-ribonucleoside + phosphate = a purine nucleobase + 2-deoxy-alpha-D-ribose 1-phosphate. Catalyzes the reversible phosphorolytic breakdown of the N-glycosidic bond in the beta-(deoxy)ribonucleoside molecules, with the formation of the corresponding free purine bases and pentose-1-phosphate. The protein is Purine nucleoside phosphorylase DeoD-type of Clostridium perfringens (strain ATCC 13124 / DSM 756 / JCM 1290 / NCIMB 6125 / NCTC 8237 / Type A).